The sequence spans 250 residues: Biosynthetic peptidoglycan transglycosylase (250 aa).

A helical transmembrane segment spans residues 15-35; it reads AVLLFFVSSLGFVLLYRFVPV.

It belongs to the glycosyltransferase 51 family.

The protein resides in the cell inner membrane. It carries out the reaction [GlcNAc-(1-&gt;4)-Mur2Ac(oyl-L-Ala-gamma-D-Glu-L-Lys-D-Ala-D-Ala)](n)-di-trans,octa-cis-undecaprenyl diphosphate + beta-D-GlcNAc-(1-&gt;4)-Mur2Ac(oyl-L-Ala-gamma-D-Glu-L-Lys-D-Ala-D-Ala)-di-trans,octa-cis-undecaprenyl diphosphate = [GlcNAc-(1-&gt;4)-Mur2Ac(oyl-L-Ala-gamma-D-Glu-L-Lys-D-Ala-D-Ala)](n+1)-di-trans,octa-cis-undecaprenyl diphosphate + di-trans,octa-cis-undecaprenyl diphosphate + H(+). It participates in cell wall biogenesis; peptidoglycan biosynthesis. Functionally, peptidoglycan polymerase that catalyzes glycan chain elongation from lipid-linked precursors. In Bdellovibrio bacteriovorus (strain ATCC 15356 / DSM 50701 / NCIMB 9529 / HD100), this protein is Biosynthetic peptidoglycan transglycosylase.